A 389-amino-acid chain; its full sequence is Lipid-A-disaccharide synthase (389 aa).

Belongs to the LpxB family.

The enzyme catalyses a lipid X + a UDP-2-N,3-O-bis[(3R)-3-hydroxyacyl]-alpha-D-glucosamine = a lipid A disaccharide + UDP + H(+). The protein operates within bacterial outer membrane biogenesis; LPS lipid A biosynthesis. In terms of biological role, condensation of UDP-2,3-diacylglucosamine and 2,3-diacylglucosamine-1-phosphate to form lipid A disaccharide, a precursor of lipid A, a phosphorylated glycolipid that anchors the lipopolysaccharide to the outer membrane of the cell. This is Lipid-A-disaccharide synthase from Albidiferax ferrireducens (strain ATCC BAA-621 / DSM 15236 / T118) (Rhodoferax ferrireducens).